Reading from the N-terminus, the 186-residue chain is MNVSKYVAIFFFVFIQLISVGKVFANADEWMTTFRENIAQTWQQPEHYDLYIPAITWHARFAYDKEKTDRYNERPWGGGFGQSRWDEKGNWHGLYAMAFKDSWNKWEPIAGYGWESTWRPLADENFHLGLGFTAGVTARDNWNYIPLPVLLPLASVGYGPATFQMTYIPGTYNNGNVYFAWMRFQF.

The N-terminal stretch at 1 to 25 is a signal peptide; the sequence is MNVSKYVAIFFFVFIQLISVGKVFA. Active-site residues include H58, D101, and S102.

It belongs to the lipid A palmitoyltransferase family. In terms of assembly, homodimer.

It is found in the cell outer membrane. The catalysed reaction is lipid A (E. coli) + a 1-hexadecanoyl-2-acyl-sn-glycero-3-phosphocholine = hepta-acyl lipid A (E. coli) + a 2-acyl-sn-glycero-3-phosphocholine. The enzyme catalyses lipid IIA + a 1-hexadecanoyl-2-acyl-sn-glycero-3-phosphocholine = lipid IIB + a 2-acyl-sn-glycero-3-phosphocholine. It catalyses the reaction lipid IVA (E. coli) + a 1-hexadecanoyl-2-acyl-sn-glycero-3-phosphocholine = lipid IVB (E. coli) + a 2-acyl-sn-glycero-3-phosphocholine. Its function is as follows. Transfers a palmitate residue from the sn-1 position of a phospholipid to the N-linked hydroxymyristate on the proximal unit of lipid A or its precursors. In Escherichia coli O6:H1 (strain CFT073 / ATCC 700928 / UPEC), this protein is Lipid A palmitoyltransferase PagP.